A 399-amino-acid polypeptide reads, in one-letter code: Phosphoglycerate kinase (399 aa).

Substrate contacts are provided by residues 22-24 (DFN), Arg-38, 61-64 (HLGR), Arg-120, and Arg-153. ATP contacts are provided by residues Lys-206, Gly-297, Glu-328, and 354-357 (GGDT).

Belongs to the phosphoglycerate kinase family. In terms of assembly, monomer.

Its subcellular location is the cytoplasm. It catalyses the reaction (2R)-3-phosphoglycerate + ATP = (2R)-3-phospho-glyceroyl phosphate + ADP. It participates in carbohydrate degradation; glycolysis; pyruvate from D-glyceraldehyde 3-phosphate: step 2/5. In Campylobacter concisus (strain 13826), this protein is Phosphoglycerate kinase.